A 61-amino-acid chain; its full sequence is MNAKFILLLLVVTTTILLPDTQGAEVIKCRTPKDCADPCRKQTGCPHAKCMNKTCRCHRCG.

Residues 1-23 (MNAKFILLLLVVTTTILLPDTQG) form the signal peptide. Cystine bridges form between Cys29-Cys50, Cys35-Cys55, Cys39-Cys57, and Cys45-Cys60. Cys60 carries the post-translational modification Cysteine amide.

The protein belongs to the short scorpion toxin superfamily. Potassium channel inhibitor family. Alpha-KTx 06 subfamily. As to expression, expressed by the venom gland.

It is found in the secreted. Blocker of voltage-gated potassium channels. The chain is Potassium channel toxin alpha-KTx 6.8 from Opistophthalmus carinatus (African yellow leg scorpion).